A 283-amino-acid chain; its full sequence is Diphthine methyl ester synthase (283 aa).

S-adenosyl-L-methionine contacts are provided by residues Leu-9, Asp-84, Gly-87, Ser-112–Ile-113, Leu-163, Met-221, and His-246.

Belongs to the diphthine synthase family.

The protein resides in the cytoplasm. The catalysed reaction is 2-[(3S)-amino-3-carboxypropyl]-L-histidyl-[translation elongation factor 2] + 4 S-adenosyl-L-methionine = diphthine methyl ester-[translation elongation factor 2] + 4 S-adenosyl-L-homocysteine + 3 H(+). Its pathway is protein modification; peptidyl-diphthamide biosynthesis. Functionally, S-adenosyl-L-methionine-dependent methyltransferase that catalyzes four methylations of the modified target histidine residue in translation elongation factor 2 (EF-2), to form an intermediate called diphthine methyl ester. The four successive methylation reactions represent the second step of diphthamide biosynthesis. In Schizosaccharomyces pombe (strain 972 / ATCC 24843) (Fission yeast), this protein is Diphthine methyl ester synthase (dph5).